Consider the following 306-residue polypeptide: tRNA dimethylallyltransferase (306 aa).

An ATP-binding site is contributed by 11–18 (GPTAVGKS). 13 to 18 (TAVGKS) provides a ligand contact to substrate. The segment at 35–38 (DSIQ) is interaction with substrate tRNA.

Belongs to the IPP transferase family. In terms of assembly, monomer. The cofactor is Mg(2+).

The catalysed reaction is adenosine(37) in tRNA + dimethylallyl diphosphate = N(6)-dimethylallyladenosine(37) in tRNA + diphosphate. Catalyzes the transfer of a dimethylallyl group onto the adenine at position 37 in tRNAs that read codons beginning with uridine, leading to the formation of N6-(dimethylallyl)adenosine (i(6)A). The protein is tRNA dimethylallyltransferase of Borreliella burgdorferi (strain ZS7) (Borrelia burgdorferi).